Consider the following 178-residue polypeptide: Adenine phosphoribosyltransferase (178 aa).

Belongs to the purine/pyrimidine phosphoribosyltransferase family. Homodimer.

It localises to the cytoplasm. It carries out the reaction AMP + diphosphate = 5-phospho-alpha-D-ribose 1-diphosphate + adenine. It functions in the pathway purine metabolism; AMP biosynthesis via salvage pathway; AMP from adenine: step 1/1. Its function is as follows. Catalyzes a salvage reaction resulting in the formation of AMP, that is energically less costly than de novo synthesis. This is Adenine phosphoribosyltransferase from Cereibacter sphaeroides (strain ATCC 17029 / ATH 2.4.9) (Rhodobacter sphaeroides).